The sequence spans 252 residues: 5-oxoprolinase subunit A 1 (252 aa).

It belongs to the LamB/PxpA family. In terms of assembly, forms a complex composed of PxpA, PxpB and PxpC.

The catalysed reaction is 5-oxo-L-proline + ATP + 2 H2O = L-glutamate + ADP + phosphate + H(+). Catalyzes the cleavage of 5-oxoproline to form L-glutamate coupled to the hydrolysis of ATP to ADP and inorganic phosphate. This chain is 5-oxoprolinase subunit A 1, found in Pseudomonas aeruginosa (strain ATCC 15692 / DSM 22644 / CIP 104116 / JCM 14847 / LMG 12228 / 1C / PRS 101 / PAO1).